The primary structure comprises 384 residues: MQIMTSSSTSPTSPTSPLAAAADNGVAAAYFNFRGAERVPESHVWKGMHEKDTAPVAAADADGGDAVPVVDMSGGDDAAVAAVARAAEEWGGFLLVGHGVTAEALARVEAQAARLFALPADDKARGARRPGGGNTGYGVPPYLLRYPKQMWAEGYTFPPPAIRDEFRRVWPDAGDDYHRFCSAMEEYDSSMRALGERLLAMFFKALGLAGNDAPGGETERKIRETLTSTIHLNMFPRCPDPDRVVGLAAHTDSGFFTFILQSPVPGLQLLRHRPDRWVTVPGTPGALIVVVGDLFHVLTNGRFHSVFHRAVVNRERDRISMPYFLGPPADMKVTPLVAAGSPESKAVYQAVTWPEYMAVRDKLFGTNISALSMIRVAKEEDKES.

Residues 225 to 327 (TLTSTIHLNM…RISMPYFLGP (103 aa)) form the Fe2OG dioxygenase domain. Fe cation contacts are provided by His250, Asp252, and His308. 2-oxoglutarate contacts are provided by Arg318 and Ser320.

Belongs to the iron/ascorbate-dependent oxidoreductase family. Requires L-ascorbate as cofactor. The cofactor is Fe(2+). Expressed in unopened flowers.

It catalyses the reaction gibberellin A20 + 2-oxoglutarate + O2 = gibberellin A1 + succinate + CO2. Its pathway is plant hormone biosynthesis; gibberellin biosynthesis. Functionally, catalyzes the 3-beta-hydroxylation of the inactive gibberellin precursors, leading to the formation of bioactive gibberellins. In vitro, converts the precursors GA20, GA5, GA44 and GA9 to the corresponding 3-beta-hydroxylated bioactive products GA1, GA3, GA38 and GA4, respectively. Involved in the production of bioactive GA for vegetative growth and development. May possess 2,3-desaturase activity, catalyzing the conversion of GA9 to 2,3-dehydro-GA9, and GA20 to GA5 (2,3-dehydro GA20). May possess 2-beta-hydroxylase activity, catalyzing the conversion of GA1 and GA4 to the corresponding 2-beta-hydroxylated products GA8 and GA34, respectively. This is Gibberellin 3-beta-dioxygenase 1 from Oryza sativa subsp. japonica (Rice).